The sequence spans 1960 residues: Zinc finger protein 638 (1960 aa).

Residues 1 to 137 (MSRPRFNPRG…SPKVQSRYTK (137 aa)) form a disordered region. Residues 19-31 (APNPPGMRPPGPF) are compositionally biased toward pro residues. An asymmetric dimethylarginine mark is found at Arg-47, Arg-49, and Arg-54. Over residues 60 to 75 (SYQNMGPQRMNVQVTQ) the composition is skewed to polar residues. Basic and acidic residues predominate over residues 76 to 89 (HRTDPRLTKEKLDF). Positions 117–137 (KQSSVTQVTEQSPKVQSRYTK) are enriched in polar residues. Ser-128 and Ser-288 each carry phosphoserine. A Glycyl lysine isopeptide (Lys-Gly) (interchain with G-Cter in SUMO2) cross-link involves residue Lys-291. Residues Ser-298, Ser-367, Ser-381, and Ser-418 each carry the phosphoserine modification. The disordered stretch occupies residues 352–373 (KSVISSADAHGGPTESKKDYQS). Disordered stretches follow at residues 463 to 673 (NPEI…QSLS), 749 to 804 (PGKK…STVK), and 827 to 899 (KASI…KESE). Basic and acidic residues predominate over residues 468-483 (PSRRNESNRKENETPR). Positions 470 to 573 (RRNESNRKEN…ERTSRKSVRS (104 aa)) are involved in localization to nuclear speckles. A compositionally biased stretch (basic residues) spans 484–556 (RRSHSPSPRH…SRNLLRRSPK (73 aa)). Phosphoserine is present on Ser-554. 2 stretches are compositionally biased toward basic and acidic residues: residues 565–583 (RTSR…EDGG) and 591–602 (EVTKQKHTETVD). Phosphoserine occurs at positions 606 and 615. Positions 618-628 (KPSAKSLSSVK) are enriched in low complexity. Ser-637 is modified (phosphoserine). The 76-residue stretch at 676 to 751 (SILLVSELPE…KSVKVCVPGK (76 aa)) folds into the RRM 1 domain. The segment covering 755-782 (QNKEMKKKPSDIKKSSASALKKETDASK) has biased composition (basic and acidic residues). Residue Lys-775 forms a Glycyl lysine isopeptide (Lys-Gly) (interchain with G-Cter in SUMO2) linkage. Over residues 783-802 (TMETVSSSSSAKSGQIKSST) the composition is skewed to low complexity. Composition is skewed to basic and acidic residues over residues 838–854 (KSLE…KDSN), 867–879 (ASSE…KSAE), and 888–899 (ATEKEPVNKESE). An RRM 2 domain is found at 902–976 (SVVFISNLPN…NQLSISMAPE (75 aa)). The span at 1082–1092 (SEVQRKNDLEL) shows a compositional bias: basic and acidic residues. Disordered stretches follow at residues 1082 to 1151 (SEVQ…EEPK), 1396 to 1420 (TVVS…PKPV), 1442 to 1462 (TRSG…GVNR), 1484 to 1527 (TKQS…KSKE), and 1550 to 1583 (PSQA…KGKT). Ser-1099 carries the phosphoserine modification. Positions 1140–1151 (VHQEELGKEEPK) are enriched in basic and acidic residues. A compositionally biased stretch (low complexity) spans 1399 to 1409 (SSPKAKSTPSK). The residue at position 1400 (Ser-1400) is a Phosphoserine. A compositionally biased stretch (polar residues) spans 1442-1459 (TRSGLAESNSKSKPTQIG). Basic and acidic residues-rich tracts occupy residues 1484–1503 (TKQS…DDSN) and 1518–1527 (TTDRSSKSKE). Residues Ser-1635 and Ser-1661 each carry the phosphoserine modification. Disordered regions lie at residues 1763 to 1898 (EVGD…SDVP) and 1930 to 1960 (KSTR…RSSR). A compositionally biased stretch (basic and acidic residues) spans 1772–1790 (NDSKVELARGKIEHHTDKK). A Glycyl lysine isopeptide (Lys-Gly) (interchain with G-Cter in SUMO2) cross-link involves residue Lys-1804. The span at 1806–1818 (DSFSQVGPGSETV) shows a compositional bias: polar residues. A compositionally biased stretch (basic and acidic residues) spans 1819-1831 (TQKDLKTMPERHL). Ser-1864 is modified (phosphoserine). Residues 1870-1885 (AELKDSEPDEKRRKTQ) show a composition bias toward basic and acidic residues. The segment at 1876–1906 (EPDEKRRKTQDSSVGKSMTSDVPGDLDFLVP) adopts a Matrin-type zinc-finger fold. Residues 1886 to 1895 (DSSVGKSMTS) are compositionally biased toward polar residues. Basic and acidic residues predominate over residues 1936 to 1960 (QNTEKFMAKQRKEKEQNETEERSSR).

Interacts with FHL2. Interacts with CEBPA, CEBPD and CEBPG. Interacts with MPHOSPH8 and TASOR components of the HUSH complex; leading to recruitment of the HUSH complex. Interacts with SETDB1. Interacts with HDAC1. Interacts with HDAC4.

Its subcellular location is the nucleus speckle. Transcription factor that binds to cytidine clusters in double-stranded DNA. Plays a key role in the silencing of unintegrated retroviral DNA: some part of the retroviral DNA formed immediately after infection remains unintegrated in the host genome and is transcriptionally repressed. Mediates transcriptional repression of unintegrated viral DNA by specifically binding to the cytidine clusters of retroviral DNA and mediating the recruitment of chromatin silencers, such as the HUSH complex, SETDB1 and the histone deacetylases HDAC1 and HDAC4. Acts as an early regulator of adipogenesis by acting as a transcription cofactor of CEBPs (CEBPA, CEBPD and/or CEBPG), controlling the expression of PPARG and probably of other proadipogenic genes, such as SREBF1. May also regulate alternative splicing of target genes during adipogenesis. The sequence is that of Zinc finger protein 638 from Mus musculus (Mouse).